The sequence spans 34 residues: Cytochrome b6-f complex subunit 5 (34 aa).

Residues 5 to 25 (LLSGIVLGLVPVTLAGLFVTA) form a helical membrane-spanning segment.

This sequence belongs to the PetG family. As to quaternary structure, the 4 large subunits of the cytochrome b6-f complex are cytochrome b6, subunit IV (17 kDa polypeptide, PetD), cytochrome f and the Rieske protein, while the 4 small subunits are PetG, PetL, PetM and PetN. The complex functions as a dimer.

The protein resides in the plastid. It localises to the chloroplast thylakoid membrane. Functionally, component of the cytochrome b6-f complex, which mediates electron transfer between photosystem II (PSII) and photosystem I (PSI), cyclic electron flow around PSI, and state transitions. PetG is required for either the stability or assembly of the cytochrome b6-f complex. This chain is Cytochrome b6-f complex subunit 5, found in Oltmannsiellopsis viridis (Marine flagellate).